The chain runs to 252 residues: F-box/SPRY domain-containing protein 1 (252 aa).

The F-box domain maps to 1–48; it reads MVDPLCNYNVLESIFSYLELNDLNRCSQVCKSWYHFLNDENSDVWRWH. In terms of domain architecture, B30.2/SPRY spans 58 to 250; it reads VKSDLLSSVT…VSMVYLGTPL (193 aa).

This sequence belongs to the FBXO45/Fsn family. Component of an E3 ubiquitin ligase complex composed of hiw and Fsn.

The protein localises to the synapse. The protein operates within protein modification; protein ubiquitination. Functionally, required in the presynaptic motoneuron to down-regulate the levels of wnd and restrain synaptic terminal growth at the neuromuscular junction (NMJ). The polypeptide is F-box/SPRY domain-containing protein 1 (Drosophila grimshawi (Hawaiian fruit fly)).